The following is a 1010-amino-acid chain: DTSEFDPLANKEYTEEQKQTLEQEQKEFLSQTTTPALEADDGFIVTSASFAQSTPSMSVLSGNISPSQTSDPITKAVRETIIQPQKDNLIEQILKDLAALTDRDLAEQKRKEIEEEKEKDKTLSTFFGNPANREFIDKALENPELKKKLESIEIAGYKNVHNTFSAASGYPGGFKPVQWENHVSASDLRATVVKNDAGDELCTLNETTVKTKPFTLAKQDGTQVQISSYREIDFPIKLDKADGSMHLSMVALKADGTKPSKDKPVYFTAHYEEGPNGKPQLKEISSPKPLKFAGTGDDAIAYIEHGGEIYTLAVTRGKYKDMMKEVELNQGQSVDLSQAEDIIIGQGQSKEQPLITPQQTTSSSVEPPQHKQQVPPITPTNQPLQPETSQMPQSQQVNPNLLNTATALSGSMQDLLNYVNAGLTKEIDSNKQIDLIKEAATAILNNEKSDIVEKQANIIALAENTVNNKNLKPDAKVAGVNAVLEIIKNDQNTPNLEKSKMLEATVAIVLNSENLEPKQKQQMLEKAVDVGLSLKDDASRAATIDGIKDVVIKSNLYTEDKGTMLIAVGDKVNVSELSNAEKQKLLGSVLKKGVEAQVLSPAQQQLMQQHLDKITAEQTKKDTIKKVNDILFDPLSNTELKTTNIQAITSNVLDGPATAEVKGEIIQEITNTVAGSSLEAQDKAEIVKGVGETIATHSDTSLSLPNKALIMASAEKGIAESKTNLPDRELMTKVLVDGIYEGKGGPEITKAVSSGIDNSNINDSEKEALKKAKDAASEAALDRDTQNLTEGFKGQNIEEHKPHDDIYNKAREVINAVNPVIEALEKSKEPVVSAEERIVQETSSILNNISKLAVEKVNNLRSMLSPNGNLKTLEEKKEESIKKVDELVKAFGTKSSTEEQQSFIKTNLIDDKTLSKEVRLQTIDKLLQEQKRAEAIENPSFKTEDVRVVSGKSKLKPISKDNPDIEKAKMVVGRDRVNIKGNIKIMGALMNARDIIQSENLNKSTPIKRE.

Disordered regions lie at residues 1-34 and 347-396; these read DTSE…QTTT and GQSK…QSQQ. The span at 12–27 shows a compositional bias: basic and acidic residues; sequence EYTEEQKQTLEQEQKE. Polar residues-rich tracts occupy residues 347 to 372 and 379 to 396; these read GQSK…QHKQ and PTNQ…QSQQ.

Its subcellular location is the cytoplasm. The protein is Antigenic heat-stable 120 kDa protein (sca4) of Rickettsia parkeri.